The sequence spans 146 residues: Hut operon positive regulatory protein (146 aa).

Belongs to the HutP family. Homohexamer.

In terms of biological role, antiterminator that binds to cis-acting regulatory sequences on the mRNA in the presence of histidine, thereby suppressing transcription termination and activating the hut operon for histidine utilization. The chain is Hut operon positive regulatory protein from Bacillus cereus (strain G9842).